The sequence spans 414 residues: 2-acylphloroglucinol 4-prenyltransferase (414 aa).

Residues 1 to 86 constitute a chloroplast transit peptide; the sequence is MELSSVSSFS…LKPLSIFSCK (86 aa). The next 8 membrane-spanning stretches (helical) occupy residues 153 to 173, 201 to 221, 229 to 249, 256 to 276, 281 to 301, 336 to 356, 359 to 379, and 394 to 414; these read FSWPLIFRALLGMLAILGSCF, ISVESAWLLTLSPAIIGFILI, LLTSLYCLAILSGTIYSVPPF, ITAFLCILMIHAGLNFSVYYA, LGLAFVWSPSFSFITAFITFM, LLGTGLLLLNYVAAISTAIIW, AFKSNIMLLSHAILAFSLFFQ, and KSFYEFIWILFSAEYVVYLFI.

The protein belongs to the UbiA prenyltransferase family. In terms of assembly, component an active demethylxanthohumol (DMX) biosynthetic metabolon in glandular trichomes (lupulin glands) that encompasses a chalcone synthase (CHS) and a membrane-bound prenyltransferase. Interacts with PT2, forming a functional metabolon. Interacts with CHIL2; this interaction promotes catalytic activity. Mg(2+) serves as cofactor. Expressed in trichomes.

The protein localises to the plastid. Its subcellular location is the chloroplast membrane. It catalyses the reaction 2',4,4',6'-tetrahydroxychalcone + dimethylallyl diphosphate = desmethylxanthohumol + diphosphate. The catalysed reaction is a 2-acylphloroglucinol + dimethylallyl diphosphate = a 2-acyl-4-prenylphloroglucinol + diphosphate. It functions in the pathway secondary metabolite biosynthesis. With respect to regulation, stimulated by CHIL2 but inhibited by CHIL1. Involved in the biosynthesis of prenylated phenolics natural products which contribute to the bitter taste of beer and display broad biological activities. Catalyzes the first prenylation step in the beta-bitter acid pathway. Uses dimethylallyl diphosphate (DMAPP) as the prenyl donor. The sequence is that of 2-acylphloroglucinol 4-prenyltransferase from Humulus lupulus (European hop).